Consider the following 443-residue polypeptide: Ribulose bisphosphate carboxylase large chain (443 aa).

Residues Asn89 and Thr139 each contribute to the substrate site. Residue Lys141 is the Proton acceptor of the active site. Lys143 lines the substrate pocket. Mg(2+)-binding residues include Lys167, Asp169, and Glu170. Residue Lys167 is modified to N6-carboxylysine. The active-site Proton acceptor is the His260. Positions 261, 293, and 345 each coordinate substrate.

The protein belongs to the RuBisCO large chain family. Type I subfamily. As to quaternary structure, heterohexadecamer of 8 large chains and 8 small chains; disulfide-linked. The disulfide link is formed within the large subunit homodimers. Mg(2+) serves as cofactor. The disulfide bond which can form in the large chain dimeric partners within the hexadecamer appears to be associated with oxidative stress and protein turnover.

The protein localises to the plastid. It localises to the chloroplast. The enzyme catalyses 2 (2R)-3-phosphoglycerate + 2 H(+) = D-ribulose 1,5-bisphosphate + CO2 + H2O. It catalyses the reaction D-ribulose 1,5-bisphosphate + O2 = 2-phosphoglycolate + (2R)-3-phosphoglycerate + 2 H(+). RuBisCO catalyzes two reactions: the carboxylation of D-ribulose 1,5-bisphosphate, the primary event in carbon dioxide fixation, as well as the oxidative fragmentation of the pentose substrate in the photorespiration process. Both reactions occur simultaneously and in competition at the same active site. The chain is Ribulose bisphosphate carboxylase large chain from Villarsia calthifolia (Marsh flower).